Consider the following 104-residue polypeptide: Transcription and mRNA export factor ENY2 (104 aa).

A compositionally biased stretch (basic and acidic residues) spans 1 to 14 (MADYGSDKKSRDNQ). Positions 1 to 22 (MADYGSDKKSRDNQMRSAINQQ) are disordered.

The protein belongs to the ENY2 family. Component of the nuclear pore complex (NPC)-associated TREX-2 complex (transcription and export complex 2). Component of the SAGA transcription coactivator-HAT complex. Within the SAGA complex, participates in a subcomplex of SAGA called the DUB module (deubiquitination module).

Its subcellular location is the nucleus. The protein localises to the nucleoplasm. In terms of biological role, involved in mRNA export coupled transcription activation by association with both the TREX-2 and the SAGA complexes. The transcription regulatory histone acetylation (HAT) complex SAGA is a multiprotein complex that activates transcription by remodeling chromatin and mediating histone acetylation and deubiquitination. Within the SAGA complex, participates in a subcomplex that specifically deubiquitinates histones. The SAGA complex is recruited to specific gene promoters by activators, where it is required for transcription. The TREX-2 complex functions in docking export-competent ribonucleoprotein particles (mRNPs) to the nuclear entrance of the nuclear pore complex (nuclear basket). TREX-2 participates in mRNA export and accurate chromatin positioning in the nucleus by tethering genes to the nuclear periphery. The chain is Transcription and mRNA export factor ENY2 from Ciona intestinalis (Transparent sea squirt).